The chain runs to 141 residues: HTH-type transcriptional repressor NsrR (141 aa).

The HTH rrf2-type domain occupies Gln-2–Glu-129. The segment at residues Ile-28–Arg-51 is a DNA-binding region (H-T-H motif). [2Fe-2S] cluster-binding residues include Cys-91, Cys-96, and Cys-102.

It depends on [2Fe-2S] cluster as a cofactor.

Its function is as follows. Nitric oxide-sensitive repressor of genes involved in protecting the cell against nitrosative stress. May require iron for activity. This Salmonella choleraesuis (strain SC-B67) protein is HTH-type transcriptional repressor NsrR.